A 91-amino-acid chain; its full sequence is Tityustoxin-19 (91 aa).

The signal sequence occupies residues 1–25 (MVATNRCCVFALLFALLLVHSLTEA). One can recognise a BetaSPN-type CS-alpha/beta domain in the interval 58-91 (EYACPAIDKFCEDHCAAKKAVGKCDDFKCNCIKL). Disulfide bonds link C61–C81, C68–C86, and C72–C88.

The protein belongs to the long chain scorpion toxin family. Class 2 subfamily. As to expression, expressed by the venom gland.

Its subcellular location is the secreted. Its function is as follows. May function as a voltage-gated potassium channel blocker and may have cytolytic activity. Is often not detected in the tested venom fractions, suggesting that the toxin is likely subject to frequent processing within the venom. Specific and reversible blocker of the potassium channel Kv1.2/KCNA2 (IC(50)=544 nM). Functionally, shows cytolytic effects on erythrocytes and induces non-selective pore formation when high concentrations (300 nM) are applied on oocytes. In terms of biological role, does not cause hemolysis, mast cell degranulation, LDH release, and does not have antimicrobial activity. Does not cause edema and pain. The protein is Tityustoxin-19 of Tityus serrulatus (Brazilian scorpion).